The primary structure comprises 321 residues: Cytochrome c biogenesis protein CcsA (321 aa).

The next 8 helical transmembrane spans lie at 17–37 (VVSI…FVGL), 48–68 (TFFC…HLPI), 71–91 (LYES…VPYF), 98–118 (LSTI…WGLL), 143–163 (MVSG…LLVI), 225–245 (ILSI…VWAN), 259–273 (TWAF…IYFH), and 286–306 (AIVA…VNLL).

This sequence belongs to the CcmF/CycK/Ccl1/NrfE/CcsA family. As to quaternary structure, may interact with Ccs1.

It localises to the plastid. The protein resides in the chloroplast thylakoid membrane. In terms of biological role, required during biogenesis of c-type cytochromes (cytochrome c6 and cytochrome f) at the step of heme attachment. The polypeptide is Cytochrome c biogenesis protein CcsA (Populus trichocarpa (Western balsam poplar)).